Reading from the N-terminus, the 179-residue chain is Large ribosomal subunit protein uL6 (179 aa).

Belongs to the universal ribosomal protein uL6 family. Part of the 50S ribosomal subunit.

Functionally, this protein binds to the 23S rRNA, and is important in its secondary structure. It is located near the subunit interface in the base of the L7/L12 stalk, and near the tRNA binding site of the peptidyltransferase center. In Bifidobacterium longum (strain DJO10A), this protein is Large ribosomal subunit protein uL6.